Reading from the N-terminus, the 290-residue chain is Ribosomal RNA small subunit methyltransferase A (290 aa).

The S-adenosyl-L-methionine site is built by Asn-27, Leu-29, Gly-54, Glu-75, Asp-100, and Asn-125.

It belongs to the class I-like SAM-binding methyltransferase superfamily. rRNA adenine N(6)-methyltransferase family. RsmA subfamily.

The protein resides in the cytoplasm. The catalysed reaction is adenosine(1518)/adenosine(1519) in 16S rRNA + 4 S-adenosyl-L-methionine = N(6)-dimethyladenosine(1518)/N(6)-dimethyladenosine(1519) in 16S rRNA + 4 S-adenosyl-L-homocysteine + 4 H(+). In terms of biological role, specifically dimethylates two adjacent adenosines (A1518 and A1519) in the loop of a conserved hairpin near the 3'-end of 16S rRNA in the 30S particle. May play a critical role in biogenesis of 30S subunits. The chain is Ribosomal RNA small subunit methyltransferase A from Streptococcus pyogenes serotype M1.